The primary structure comprises 761 residues: MSCCTMDAESVLALSTTSFSAEEVRLASQPLGEGLRQLDLSVSDVHCGGCISTIERALLTLPFVKTARVNLTARRVTCVYQEEIEARATDPSKILGEINSAGYRAHLFTPSAPESDKTRNQLLLAIGVSGFAAPNIMLLSVSVWSGADAATRDMFHWISAMIAAPALVYAGRFFFKSAWNALRHGRTNMDVPISVTVSLSYAVSLWETVHHGEHAWFDASVSLLFFLLIGRTLDHIMREKARAAINGLARLAPRGALLINPDGSRRYIAVEEIAAGDEISIAAGERVPVDGIVVSGESDLDLSIVTGESSPVTVASDSEVSSGAMNLTGSLVLRATRIAKNSLLSEIIGLMEAAEGGRARYRRIADRAATLYSPVVHLLALVSFLAWGFLGGDWKQAMLVAVAVLIITCPCALGLAVPVVQVVAAGELFRKGIMVKDGSALERLAETDTVAFDKTGTLTMGSSRLVRVDAMDESAAAIARGLAAHSRHPLSRALVRDTETAPISFDRVTEIPGGGLEARNGADIYRLGNAAFACGTSFVPRTADSPFSEVVLSKNGVDLARFFFDDTLRPGACEAIDRLDAAGLETLIVSGDRQTVVDNTAHALGIDRALGSLTPKQKVEECQRLNGEGRRVLMVGDGINDAPALAAAHVSMAPATASDIGRQAADLVFFIDRLDAVPEAIAVARRSASLIRQNFALAIGYNVLAVPIAIAGLATPLIAAVAMSTSSIIVVTNALRLNGFGKRPDMHIRRGIGRSAEVKAA.

The Cytoplasmic portion of the chain corresponds to 1–120; the sequence is MSCCTMDAES…SAPESDKTRN (120 aa). The HMA domain maps to 36–106; sequence RQLDLSVSDV…EINSAGYRAH (71 aa). Residues cysteine 47 and cysteine 50 each contribute to the a metal cation site. Residues 121–142 traverse the membrane as a helical segment; the sequence is QLLLAIGVSGFAAPNIMLLSVS. Residues 143 to 155 lie on the Extracellular side of the membrane; the sequence is VWSGADAATRDMF. Residues 156 to 177 traverse the membrane as a helical segment; that stretch reads HWISAMIAAPALVYAGRFFFKS. Topologically, residues 178 to 184 are cytoplasmic; that stretch reads AWNALRH. The helical transmembrane segment at 185–205 threads the bilayer; it reads GRTNMDVPISVTVSLSYAVSL. The Extracellular portion of the chain corresponds to 206–217; the sequence is WETVHHGEHAWF. Residues 218 to 238 form a helical membrane-spanning segment; that stretch reads DASVSLLFFLLIGRTLDHIMR. Topologically, residues 239–367 are cytoplasmic; it reads EKARAAINGL…RARYRRIADR (129 aa). The helical transmembrane segment at 368-390 threads the bilayer; that stretch reads AATLYSPVVHLLALVSFLAWGFL. Residues 391–395 lie on the Extracellular side of the membrane; the sequence is GGDWK. The helical transmembrane segment at 396–415 threads the bilayer; that stretch reads QAMLVAVAVLIITCPCALGL. Topologically, residues 416–691 are cytoplasmic; it reads AVPVVQVVAA…AVARRSASLI (276 aa). Catalysis depends on aspartate 453, which acts as the 4-aspartylphosphate intermediate. 2 residues coordinate Mg(2+): aspartate 637 and aspartate 641. Residues 692 to 711 traverse the membrane as a helical segment; that stretch reads RQNFALAIGYNVLAVPIAIA. The Extracellular portion of the chain corresponds to 712–716; it reads GLATP. Residues 717-735 traverse the membrane as a helical segment; that stretch reads LIAAVAMSTSSIIVVTNAL. At 736–761 the chain is on the cytoplasmic side; it reads RLNGFGKRPDMHIRRGIGRSAEVKAA.

It belongs to the cation transport ATPase (P-type) (TC 3.A.3) family. Type IB subfamily.

The protein localises to the cell membrane. The enzyme catalyses ATP + H2O = ADP + phosphate + H(+). FixI is a pump of a specific cation involved in symbiotic nitrogen fixation. The four proteins FixG, FixH, FixI, and FixS may participate in a membrane-bound complex coupling the FixI cation pump with a redox process catalyzed by FixG. This Rhizobium leguminosarum bv. viciae protein is Nitrogen fixation protein FixI (fixI).